Consider the following 488-residue polypeptide: MTFNHKSIDELHDLLVNKEVSALELTKATLEDIKEREETVGSFITVTQEEALAQAAAIDEKGIDADNVMSGIPLAVKDNISTKNILTTAASKMLYNYKPIFDATSVEKLYGRDMIIVGKTNMDEFAMGGSTENSYFKLTKNAWNQEKVAGGSSGGSATAVASGQVRLSLGSDTGGSIRQPAAFNGVVGIKPTYGRVSRFGLIAFGSSLDQIGPFSQTVKENAQLLNVISGNDKKDSTSSQVKVPDFTQFIGKDIKGMKIALPKEYIGQGIDEKVKETILKAAKHLESLGAIVEEVSLPHSKYGVAVYYIIASSEASSNLQRFDGIRYGYRTDDYENLDDVYVNTRSEGFGEEVKRRIMLGTFSLSSGYYDAYFKKAGQVRTLIMEDFKKVFANYDLILGPTAPTVAYDLDSQHQDPVAMYLADLLTIPVNLAGLPGISIPAGFVEGLPVGMQLIGKPFAEQTIYQAAAAFEASTDYHKQQPVIFGGGN.

Catalysis depends on charge relay system residues Lys-77 and Ser-152. Ser-176 acts as the Acyl-ester intermediate in catalysis.

The protein belongs to the amidase family. GatA subfamily. Heterotrimer of A, B and C subunits.

The catalysed reaction is L-glutamyl-tRNA(Gln) + L-glutamine + ATP + H2O = L-glutaminyl-tRNA(Gln) + L-glutamate + ADP + phosphate + H(+). Allows the formation of correctly charged Gln-tRNA(Gln) through the transamidation of misacylated Glu-tRNA(Gln) in organisms which lack glutaminyl-tRNA synthetase. The reaction takes place in the presence of glutamine and ATP through an activated gamma-phospho-Glu-tRNA(Gln). This chain is Glutamyl-tRNA(Gln) amidotransferase subunit A, found in Streptococcus mutans serotype c (strain ATCC 700610 / UA159).